A 420-amino-acid chain; its full sequence is Outer capsid protein P8 (420 aa).

Belongs to the phytoreovirus outer capsid protein P8 family. As to quaternary structure, homotrimer. Homomultimer. Interacts with host peroxisomal glycolate oxidase (GOX). This interaction mediates its relocation to virus factories peripheral to host peroxisomes.

It localises to the virion. The protein localises to the host cytoplasm. Its function is as follows. Capsid protein which self-assembles to form the outer icosahedral capsid with a T=13 symmetry, about 70 nm in diameter and consisting of 780 molecules capsid proteins. This Alopecurus aequalis (Barnyard grass) protein is Outer capsid protein P8.